Reading from the N-terminus, the 518-residue chain is GMP synthase [glutamine-hydrolyzing] (518 aa).

A Glutamine amidotransferase type-1 domain is found at 13 to 203 (KIIVLDFGSQ…ALNICGCKGD (191 aa)). The active-site Nucleophile is cysteine 90. Catalysis depends on residues histidine 177 and glutamate 179. A GMPS ATP-PPase domain is found at 204–393 (WTMENFSEVE…LGMPDAIVWR (190 aa)). Residue 231–237 (SGGVDSS) coordinates ATP.

Homodimer.

It carries out the reaction XMP + L-glutamine + ATP + H2O = GMP + L-glutamate + AMP + diphosphate + 2 H(+). It participates in purine metabolism; GMP biosynthesis; GMP from XMP (L-Gln route): step 1/1. Catalyzes the synthesis of GMP from XMP. The protein is GMP synthase [glutamine-hydrolyzing] of Listeria innocua serovar 6a (strain ATCC BAA-680 / CLIP 11262).